The primary structure comprises 219 residues: Cytidylate kinase (219 aa).

An ATP-binding site is contributed by 21–29 (GPAASGKGT).

This sequence belongs to the cytidylate kinase family. Type 1 subfamily.

The protein resides in the cytoplasm. It carries out the reaction CMP + ATP = CDP + ADP. It catalyses the reaction dCMP + ATP = dCDP + ADP. This chain is Cytidylate kinase, found in Rickettsia conorii (strain ATCC VR-613 / Malish 7).